The primary structure comprises 332 residues: Glycerol-3-phosphate dehydrogenase [NAD(P)+] (332 aa).

Positions 11, 30, and 108 each coordinate NADPH. Sn-glycerol 3-phosphate-binding residues include K108, G137, and S139. Residue A141 participates in NADPH binding. Sn-glycerol 3-phosphate is bound by residues K192, D245, S255, R256, and N257. K192 (proton acceptor) is an active-site residue. Residue R256 coordinates NADPH. V280 and E282 together coordinate NADPH.

The protein belongs to the NAD-dependent glycerol-3-phosphate dehydrogenase family.

Its subcellular location is the cytoplasm. It carries out the reaction sn-glycerol 3-phosphate + NAD(+) = dihydroxyacetone phosphate + NADH + H(+). The enzyme catalyses sn-glycerol 3-phosphate + NADP(+) = dihydroxyacetone phosphate + NADPH + H(+). It participates in membrane lipid metabolism; glycerophospholipid metabolism. Its function is as follows. Catalyzes the reduction of the glycolytic intermediate dihydroxyacetone phosphate (DHAP) to sn-glycerol 3-phosphate (G3P), the key precursor for phospholipid synthesis. The sequence is that of Glycerol-3-phosphate dehydrogenase [NAD(P)+] from Burkholderia multivorans (strain ATCC 17616 / 249).